An 83-amino-acid polypeptide reads, in one-letter code: Apolipoprotein C-I (83 aa).

Residues 1–26 (MRLILSLPVLAVVLAMVLEGPAPAQA) form the signal peptide.

Belongs to the apolipoprotein C1 family.

It localises to the secreted. Inhibitor of lipoprotein binding to the low density lipoprotein (LDL) receptor, LDL receptor-related protein, and very low density lipoprotein (VLDL) receptor. Associates with high density lipoproteins (HDL) and the triacylglycerol-rich lipoproteins in the plasma and makes up about 10% of the protein of the VLDL and 2% of that of HDL. Appears to interfere directly with fatty acid uptake and is also the major plasma inhibitor of cholesteryl ester transfer protein (CETP). Binds free fatty acids and reduces their intracellular esterification. Modulates the interaction of APOE with beta-migrating VLDL and inhibits binding of beta-VLDL to the LDL receptor-related protein. The chain is Apolipoprotein C-I (APOC1) from Eonycteris spelaea (Lesser dawn bat).